The primary structure comprises 265 residues: Glutamate racemase (265 aa).

Residues 12–13 and 44–45 each bind substrate; these read DS and YG. Residue cysteine 75 is the Proton donor/acceptor of the active site. 76-77 provides a ligand contact to substrate; that stretch reads NT. Cysteine 186 acts as the Proton donor/acceptor in catalysis. Substrate is bound at residue 187 to 188; that stretch reads TH.

This sequence belongs to the aspartate/glutamate racemases family.

It catalyses the reaction L-glutamate = D-glutamate. Its pathway is cell wall biogenesis; peptidoglycan biosynthesis. Its function is as follows. Provides the (R)-glutamate required for cell wall biosynthesis. This is Glutamate racemase from Pseudomonas aeruginosa (strain ATCC 15692 / DSM 22644 / CIP 104116 / JCM 14847 / LMG 12228 / 1C / PRS 101 / PAO1).